Consider the following 245-residue polypeptide: MLIIPAIDLKDGACVRLRQGRMEDSTVFSDDPVSMAAKWVEGGCRRLHLVDLNGAFEGQPVNGEVVTAIAKRYPNLPIQIGGGIRSLETIEHYVKAGVSHVIIGTKAVKQPEFVAEACKAFPGRVIVGLDAKDGFVATDGWAEVSAVQVIDLAKRFEADGVSAIVYTDIAKDGMMQGCNVPFTKALAEATSIPVIASGGIHNLGDIKALLDAKAPGIIGAITGRAIYEGTLDVAEAQAFCDNYQG.

Asp8 acts as the Proton acceptor in catalysis. Asp130 serves as the catalytic Proton donor.

It belongs to the HisA/HisF family.

It localises to the cytoplasm. It carries out the reaction 1-(5-phospho-beta-D-ribosyl)-5-[(5-phospho-beta-D-ribosylamino)methylideneamino]imidazole-4-carboxamide = 5-[(5-phospho-1-deoxy-D-ribulos-1-ylimino)methylamino]-1-(5-phospho-beta-D-ribosyl)imidazole-4-carboxamide. The protein operates within amino-acid biosynthesis; L-histidine biosynthesis; L-histidine from 5-phospho-alpha-D-ribose 1-diphosphate: step 4/9. The sequence is that of 1-(5-phosphoribosyl)-5-[(5-phosphoribosylamino)methylideneamino] imidazole-4-carboxamide isomerase from Pseudomonas entomophila (strain L48).